The sequence spans 620 residues: Translation initiation factor IF-2 (620 aa).

The tr-type G domain maps to 119 to 288 (ERPPIVTIMG…IILISELENL (170 aa)). The interval 128-135 (GHVDHGKT) is G1. Residue 128-135 (GHVDHGKT) participates in GTP binding. The G2 stretch occupies residues 153-157 (GITQA). Positions 175–178 (DTPG) are G3. Residues 175-179 (DTPGH) and 229-232 (NKID) each bind GTP. The segment at 229–232 (NKID) is G4. The G5 stretch occupies residues 265 to 267 (SAI).

Belongs to the TRAFAC class translation factor GTPase superfamily. Classic translation factor GTPase family. IF-2 subfamily.

Its subcellular location is the cytoplasm. Its function is as follows. One of the essential components for the initiation of protein synthesis. Protects formylmethionyl-tRNA from spontaneous hydrolysis and promotes its binding to the 30S ribosomal subunits. Also involved in the hydrolysis of GTP during the formation of the 70S ribosomal complex. In Mycoplasma capricolum subsp. capricolum (strain California kid / ATCC 27343 / NCTC 10154), this protein is Translation initiation factor IF-2.